Reading from the N-terminus, the 374-residue chain is Protein RecA (374 aa).

Position 66–73 (66–73 (GPESSGKT)) interacts with ATP. Positions 326-374 (KLGVGVHPEESATEPGADAASAAPADAAPAVPAPTTAKATKSKATAAKS) are disordered. Residues 338-374 (TEPGADAASAAPADAAPAVPAPTTAKATKSKATAAKS) are compositionally biased toward low complexity.

This sequence belongs to the RecA family.

The protein localises to the cytoplasm. In terms of biological role, can catalyze the hydrolysis of ATP in the presence of single-stranded DNA, the ATP-dependent uptake of single-stranded DNA by duplex DNA, and the ATP-dependent hybridization of homologous single-stranded DNAs. It interacts with LexA causing its activation and leading to its autocatalytic cleavage. The chain is Protein RecA from Streptomyces coelicolor (strain ATCC BAA-471 / A3(2) / M145).